The primary structure comprises 438 residues: MPKRIRMTTSNATNSLIEDLRWRGLLNQTTDENGIAELLNSGPQTIYIGFDPTATSLHVGGMMQLMMLRRFQRAGHNPIALVGGATGMIGDPSGKSEERNLLSADQLQKNVDGVAAQMRHFLDFEGDNAAKLLNNFDWMKDYSYLEFLRDVGKNFPVGAMMGKESVRSRLESEAGLSYTEFSYMLLQAYDFVNLAQTHDCRIQAGGSDQWGNITAGIDLGRRMLGKQLFGITAPLLTTSDGRKMGKTESGAVWLDPERTSPYAFYQYWINVADEDVMRCLAYLTEIERAEYDELEDKTKNDPGQRTAQKRLAQWLTELVHGEAGVQSAQRATQILFGGELGDTTDSQLREIFADVPSCDVPKSALEGEGLWIVEALQTAKLCNSGGDARRALSEGGVYVNNTRVEDVQKRLTVDDLDGRSVLVLRRGKRKYALLKIQD.

Tyr47 provides a ligand contact to L-tyrosine. A 'HIGH' region motif is present at residues 52 to 61 (PTATSLHVGG). L-tyrosine-binding residues include Tyr183 and Gln187. The 'KMSKS' region motif lies at 243-247 (KMGKT). Lys246 is a binding site for ATP. An S4 RNA-binding domain is found at 370–436 (LWIVEALQTA…GKRKYALLKI (67 aa)).

It belongs to the class-I aminoacyl-tRNA synthetase family. TyrS type 1 subfamily. As to quaternary structure, homodimer.

It localises to the cytoplasm. It catalyses the reaction tRNA(Tyr) + L-tyrosine + ATP = L-tyrosyl-tRNA(Tyr) + AMP + diphosphate + H(+). Catalyzes the attachment of tyrosine to tRNA(Tyr) in a two-step reaction: tyrosine is first activated by ATP to form Tyr-AMP and then transferred to the acceptor end of tRNA(Tyr). In Rhodopirellula baltica (strain DSM 10527 / NCIMB 13988 / SH1), this protein is Tyrosine--tRNA ligase.